The chain runs to 119 residues: MKRVAFVFTHAPHGNASGREGLDALLAVSALTEEIGVFFVGDGVLQLLPQQQPDQILMRNYIATFGVLPLYDIDCCYLCETSVRQRGLSIDTNWVLDVELLAPEAWRSKLASYHSILSF.

The protein belongs to the DsrF/TusC family. As to quaternary structure, heterohexamer, formed by a dimer of trimers. The hexameric TusBCD complex contains 2 copies each of TusB, TusC and TusD. The TusBCD complex interacts with TusE.

The protein localises to the cytoplasm. In terms of biological role, part of a sulfur-relay system required for 2-thiolation of 5-methylaminomethyl-2-thiouridine (mnm(5)s(2)U) at tRNA wobble positions. This Pectobacterium carotovorum subsp. carotovorum (strain PC1) protein is Protein TusC.